Reading from the N-terminus, the 606-residue chain is Pescadillo homolog (606 aa).

The region spanning 346–447 (LSTSLFSPYT…KILLEGPYGQ (102 aa)) is the BRCT domain. The interval 461 to 497 (YEGAYDPAAGPLGPSGVEQESESEADEVSEEDEEDQG) is disordered. Over residues 479–496 (QESESEADEVSEEDEEDQ) the composition is skewed to acidic residues.

Belongs to the pescadillo family. In terms of assembly, component of the NOP7 complex, composed of ERB1, NOP7 and YTM1. The complex is held together by ERB1, which interacts with NOP7 via its N-terminal domain and with YTM1 via a high-affinity interaction between the seven-bladed beta-propeller domains of the 2 proteins. The NOP7 complex associates with the 66S pre-ribosome.

Its subcellular location is the nucleus. It is found in the nucleolus. It localises to the nucleoplasm. Its function is as follows. Component of the NOP7 complex, which is required for maturation of the 25S and 5.8S ribosomal RNAs and formation of the 60S ribosome. The chain is Pescadillo homolog from Laccaria bicolor (strain S238N-H82 / ATCC MYA-4686) (Bicoloured deceiver).